Here is a 134-residue protein sequence, read N- to C-terminus: Ribosome-binding factor A (134 aa).

It belongs to the RbfA family. In terms of assembly, monomer. Binds 30S ribosomal subunits, but not 50S ribosomal subunits or 70S ribosomes.

It localises to the cytoplasm. In terms of biological role, one of several proteins that assist in the late maturation steps of the functional core of the 30S ribosomal subunit. Associates with free 30S ribosomal subunits (but not with 30S subunits that are part of 70S ribosomes or polysomes). Required for efficient processing of 16S rRNA. May interact with the 5'-terminal helix region of 16S rRNA. This chain is Ribosome-binding factor A, found in Sinorhizobium medicae (strain WSM419) (Ensifer medicae).